A 224-amino-acid chain; its full sequence is Claudin-17 (224 aa).

The Cytoplasmic segment spans residues 1 to 7; sequence MAFYPLQ. Residues 8 to 28 traverse the membrane as a helical segment; it reads IAGLVLGFLGMVGTLATTLLP. Residues 29-81 lie on the Extracellular side of the membrane; the sequence is QWRVSAFVGSNIIVFERLWEGLWMNCIRQARVRLQCKFYSSLLALPPALETAR. A helical membrane pass occupies residues 82 to 102; the sequence is ALMCVAVALSLIALLIGICGM. Topologically, residues 103 to 124 are cytoplasmic; the sequence is KQVQCTGSNERAKAYLLGTSGV. The helical transmembrane segment at 125–145 threads the bilayer; sequence LFILTGIFVLIPVSWTANIII. At 146 to 164 the chain is on the extracellular side; the sequence is RDFYNPAIHIGQKRELGAA. The chain crosses the membrane as a helical span at residues 165–185; that stretch reads LFLGWASAAVLFIGGGLLCGF. The Cytoplasmic segment spans residues 186-224; it reads CCCNRKKQGYRYPVPGYRVPHTDKRRNTTMLSKTSTSYV.

This sequence belongs to the claudin family. Cannot form tight junction strands on its own. Interacts with OCLN. As to expression, in the kidney, expressed in the proximal tubule and in the Henle's loop. In the distal convoluted tubule, not expressed in all tubules. Not detected in the collecting duct (at protein level).

It localises to the cell junction. Its subcellular location is the tight junction. It is found in the basolateral cell membrane. The catalysed reaction is chloride(in) = chloride(out). It carries out the reaction hydrogencarbonate(in) = hydrogencarbonate(out). It catalyses the reaction bromide(in) = bromide(out). The enzyme catalyses iodide(out) = iodide(in). The catalysed reaction is fluoride(in) = fluoride(out). It carries out the reaction nitrate(in) = nitrate(out). It catalyses the reaction thiocyanate(in) = thiocyanate(out). Its function is as follows. Channel-forming tight junction protein with selectivity for anions, including chloride and hydrogencarbonate, and for solutes smaller than 9 Angstrom in diameter. In the kidney proximal tubule, may be involved in paracellular reabsorption of filtered anions. Does not affect water permeability. The protein is Claudin-17 (CLDN17) of Homo sapiens (Human).